The primary structure comprises 759 residues: Tripartite motif-containing protein 46 (759 aa).

Positions 1-166 (MAEGEDMQTF…VERYRQSVSV (166 aa)) are required for proximal axon localization, axon formation and migration. Residues 33-59 (CPVCQEMYKQPLVLPCTHNVCQACARE) form an RING-type 1; degenerate zinc finger. Residues 67–98 (IGHGGDPSSEPTSPASTPSTRSPRLSRRTLPK) form a disordered region. Residues 73-89 (PSSEPTSPASTPSTRSP) show a composition bias toward low complexity. The RING-type 2; degenerate zinc finger occupies 172-231 (CQLCKPPPLEATKGCTECRATFCNECFKLFHPWGTQKAQHEPTLPTLSFRPKGLMCPDHK). Residues 222-263 (PKGLMCPDHKEEVTHYCKTCQRLVCQLCRVRRTHSGHKITPV) form a B box-type zinc finger. Residues cysteine 227, histidine 230, cysteine 249, and histidine 255 each contribute to the Zn(2+) site. Residues 322–400 (AVLEEKRASL…RATEALQTFR (79 aa)) are a coiled coil. Residue serine 330 is modified to Phosphoserine. The COS domain maps to 370 to 427 (LKETDQPCFVQAAKQLHNRIARATEALQTFRPAASSSFRHCQLDVGREMKLLTELSFL). The segment at 411-429 (QLDVGREMKLLTELSFLRV) is required for microtubule association, proximal axon localization and axon formation. The 100-residue stretch at 429–528 (VPEAPVIDTQ…EDVHLHTPPA (100 aa)) folds into the Fibronectin type-III domain. In terms of domain architecture, B30.2/SPRY spans 526 to 747 (PPAPVLHFFL…LQEPVGTKPE (222 aa)). At serine 627 the chain carries Phosphoserine.

The protein belongs to the TRIM/RBCC family. As to quaternary structure, interacts with TUBB3 and TUBA4A. Expressed in the central nervous system, including pyramidal neurons and interneurons in the cortex and hippocampus and all neuronal cell types in the cerebral and cerebellar cortex, and in the peripheral nervous system, including the dorsal root ganglion neurons.

It is found in the cell projection. The protein resides in the axon. It localises to the cytoplasm. Its subcellular location is the cytoskeleton. Functionally, microtubule-associated protein that is involved in the formation of parallel microtubule bundles linked by cross-bridges in the proximal axon. Required for the uniform orientation and maintenance of the parallel microtubule fascicles, which are important for efficient cargo delivery and trafficking in axons. Thereby also required for proper axon formation, the establishment of neuronal polarity and proper neuronal migration. The chain is Tripartite motif-containing protein 46 (Trim46) from Mus musculus (Mouse).